We begin with the raw amino-acid sequence, 678 residues long: Probable metal-nicotianamine transporter YSL6 (678 aa).

The next 14 helical transmembrane spans lie at 41–61 (VTVR…LITH), 65–85 (LTVG…YFLV), 113–133 (CVVA…MLAM), 158–178 (LGWM…SLVA), 226–246 (ISFF…SCGF), 279–299 (IVNC…WPYI), 324–344 (VFIS…KIIY), 394–414 (LAGS…PMIF), 419–439 (WYLV…NSYG), 467–487 (GGVI…STAA), 512–532 (IGTT…WTAF), 561–581 (SALP…AILI), 606–626 (FYIG…LFVW), and 641–661 (IASG…ILSI).

Belongs to the YSL (TC 2.A.67.2) family. Expressed in roots and leaves.

It localises to the membrane. Its function is as follows. May be involved in the transport of nicotianamine-chelated metals. In Oryza sativa subsp. japonica (Rice), this protein is Probable metal-nicotianamine transporter YSL6 (YSL6).